Here is a 263-residue protein sequence, read N- to C-terminus: MRVAVSGFKGRMGHEVVKTVLREADLELVAVLDHEPKEKNINEIVEFSSLDVPVFGNLSEMLEEIKPDCVVDFTTPKVGYSNTKTILEHGVRAVVGTTGFTPEQISELRSIAESKKIGALIAPNFAVGAVLMMQFAQKAAKYFPNVEIIELHHDNKLDAPSGTAVKTAEMMAETREFVKQGAADEVELIEGARGAEYEGMRIHSVRLPGLVAHQEVIFGAEGQGLTIRHDSYDRISFMSGVALSVRKTKELETLIYGLENILD.

NAD(+) contacts are provided by residues Gly-7 to Met-12, Gly-96 to Thr-98, and Ala-122 to Phe-125. Catalysis depends on His-152, which acts as the Proton donor/acceptor. His-153 contributes to the (S)-2,3,4,5-tetrahydrodipicolinate binding site. Catalysis depends on Lys-156, which acts as the Proton donor. Gly-162–Thr-163 is a binding site for (S)-2,3,4,5-tetrahydrodipicolinate.

It belongs to the DapB family.

The protein resides in the cytoplasm. The enzyme catalyses (S)-2,3,4,5-tetrahydrodipicolinate + NAD(+) + H2O = (2S,4S)-4-hydroxy-2,3,4,5-tetrahydrodipicolinate + NADH + H(+). It carries out the reaction (S)-2,3,4,5-tetrahydrodipicolinate + NADP(+) + H2O = (2S,4S)-4-hydroxy-2,3,4,5-tetrahydrodipicolinate + NADPH + H(+). The protein operates within amino-acid biosynthesis; L-lysine biosynthesis via DAP pathway; (S)-tetrahydrodipicolinate from L-aspartate: step 4/4. Its function is as follows. Catalyzes the conversion of 4-hydroxy-tetrahydrodipicolinate (HTPA) to tetrahydrodipicolinate. This Listeria monocytogenes serotype 4b (strain F2365) protein is 4-hydroxy-tetrahydrodipicolinate reductase.